A 479-amino-acid chain; its full sequence is Aspartyl/glutamyl-tRNA(Asn/Gln) amidotransferase subunit B (479 aa).

This sequence belongs to the GatB/GatE family. GatB subfamily. In terms of assembly, heterotrimer of A, B and C subunits.

The catalysed reaction is L-glutamyl-tRNA(Gln) + L-glutamine + ATP + H2O = L-glutaminyl-tRNA(Gln) + L-glutamate + ADP + phosphate + H(+). It carries out the reaction L-aspartyl-tRNA(Asn) + L-glutamine + ATP + H2O = L-asparaginyl-tRNA(Asn) + L-glutamate + ADP + phosphate + 2 H(+). Functionally, allows the formation of correctly charged Asn-tRNA(Asn) or Gln-tRNA(Gln) through the transamidation of misacylated Asp-tRNA(Asn) or Glu-tRNA(Gln) in organisms which lack either or both of asparaginyl-tRNA or glutaminyl-tRNA synthetases. The reaction takes place in the presence of glutamine and ATP through an activated phospho-Asp-tRNA(Asn) or phospho-Glu-tRNA(Gln). This Clostridium beijerinckii (strain ATCC 51743 / NCIMB 8052) (Clostridium acetobutylicum) protein is Aspartyl/glutamyl-tRNA(Asn/Gln) amidotransferase subunit B.